We begin with the raw amino-acid sequence, 361 residues long: Probable S-adenosylmethionine-dependent methyltransferase At5g38780 (361 aa).

Positions 19, 64, 69, 106, 107, 135, and 136 each coordinate S-adenosyl-L-homocysteine. 4 residues coordinate Mg(2+): Asn174, Glu260, Phe262, and Asn263.

Belongs to the methyltransferase superfamily. Type-7 methyltransferase family. In terms of assembly, homodimer. The cofactor is Mg(2+).

This is Probable S-adenosylmethionine-dependent methyltransferase At5g38780 from Arabidopsis thaliana (Mouse-ear cress).